Here is a 174-residue protein sequence, read N- to C-terminus: Peptide deformylase (174 aa).

Residues Cys-96 and His-138 each contribute to the Fe cation site. Glu-139 is an active-site residue. Fe cation is bound at residue His-142.

It belongs to the polypeptide deformylase family. The cofactor is Fe(2+).

The catalysed reaction is N-terminal N-formyl-L-methionyl-[peptide] + H2O = N-terminal L-methionyl-[peptide] + formate. In terms of biological role, removes the formyl group from the N-terminal Met of newly synthesized proteins. Requires at least a dipeptide for an efficient rate of reaction. N-terminal L-methionine is a prerequisite for activity but the enzyme has broad specificity at other positions. The chain is Peptide deformylase from Helicobacter pylori (strain J99 / ATCC 700824) (Campylobacter pylori J99).